A 450-amino-acid chain; its full sequence is 23S rRNA (uracil(1939)-C(5))-methyltransferase RlmD (450 aa).

The tract at residues 1–22 is disordered; sequence MAKHDRGLRFQPAGGSRAPQIP. In terms of domain architecture, TRAM spans 20–78; that stretch reads QIPVGKKQRLTIQRLANDGRGIAFVEGRTWFVSGALAGEEVEARVLGSHGKVVEARAER. Cysteine 91, cysteine 97, cysteine 100, and cysteine 179 together coordinate [4Fe-4S] cluster. Residues glutamine 283, phenylalanine 312, asparagine 317, glutamate 333, aspartate 360, and aspartate 381 each contribute to the S-adenosyl-L-methionine site. Cysteine 407 acts as the Nucleophile in catalysis.

The protein belongs to the class I-like SAM-binding methyltransferase superfamily. RNA M5U methyltransferase family. RlmD subfamily.

It catalyses the reaction uridine(1939) in 23S rRNA + S-adenosyl-L-methionine = 5-methyluridine(1939) in 23S rRNA + S-adenosyl-L-homocysteine + H(+). Catalyzes the formation of 5-methyl-uridine at position 1939 (m5U1939) in 23S rRNA. This Pseudomonas fluorescens (strain ATCC BAA-477 / NRRL B-23932 / Pf-5) protein is 23S rRNA (uracil(1939)-C(5))-methyltransferase RlmD.